Consider the following 344-residue polypeptide: MTKYKLEYIWLDGYTPTPNLRGKTQIKEFASFPTLEQLPLWGFDGSSTQQAEGHSSDCVLKPVAVFPDAARTNGVLVMCEVMMPDGKTPHASNKRATILDDAGAWFGFEQEYFFYKDGRPLGFPTSGYPAPQGPYYTGVGFSNVGDVARKIVEEHLDLCLAAGINHEGINAEVAKGQWEFQIFGKGSKKAADEMWMARYLMLRLTEKYGIDIEFHCKPLGDTDWNGSGMHANFSTEYMRTVGGKEYFEALMAAFDKNLMDHIAVYGPDNDKRLTGKHETAPWNKFSYGVADRGASIRVPHSFVNNGYKGYLEDRRPNSQGDPYQIASQILKTISSVPTEKKAVA.

The region spanning 4–86 (YKLEYIWLDG…VMCEVMMPDG (83 aa)) is the GS beta-grasp domain. In terms of domain architecture, GS catalytic spans 89–344 (PHASNKRATI…SVPTEKKAVA (256 aa)). Mg(2+) is bound by residues Glu109 and Glu111. Glu167 serves as a coordination point for ATP. Residues Glu172 and Glu179 each contribute to the Mg(2+) site. Glu278 contributes to the L-glutamate binding site.

The protein belongs to the glutamine synthetase family. As to quaternary structure, homooctamer and homotetramer. The cofactor is Mg(2+).

It is found in the cytoplasm. It carries out the reaction L-glutamate + NH4(+) + ATP = L-glutamine + ADP + phosphate + H(+). Catalyzes the ATP-dependent biosynthesis of glutamine from glutamate and ammonia. This Bradyrhizobium diazoefficiens (strain JCM 10833 / BCRC 13528 / IAM 13628 / NBRC 14792 / USDA 110) protein is Glutamine synthetase.